Reading from the N-terminus, the 115-residue chain is NADH-ubiquinone oxidoreductase chain 3 (115 aa).

Helical transmembrane passes span Leu-4–Leu-24, Phe-55–Leu-75, and Ile-84–Tyr-104.

This sequence belongs to the complex I subunit 3 family. As to quaternary structure, core subunit of respiratory chain NADH dehydrogenase (Complex I) which is composed of 45 different subunits. Interacts with TMEM186. Interacts with TMEM242.

The protein localises to the mitochondrion membrane. The enzyme catalyses a ubiquinone + NADH + 5 H(+)(in) = a ubiquinol + NAD(+) + 4 H(+)(out). Functionally, core subunit of the mitochondrial membrane respiratory chain NADH dehydrogenase (Complex I) that is believed to belong to the minimal assembly required for catalysis. Complex I functions in the transfer of electrons from NADH to the respiratory chain. The immediate electron acceptor for the enzyme is believed to be ubiquinone. The polypeptide is NADH-ubiquinone oxidoreductase chain 3 (Onychomys leucogaster (Northern grasshopper mouse)).